A 95-amino-acid chain; its full sequence is Large ribosomal subunit protein uL23 (95 aa).

It belongs to the universal ribosomal protein uL23 family. As to quaternary structure, part of the 50S ribosomal subunit. Contacts protein L29, and trigger factor when it is bound to the ribosome.

One of the early assembly proteins it binds 23S rRNA. One of the proteins that surrounds the polypeptide exit tunnel on the outside of the ribosome. Forms the main docking site for trigger factor binding to the ribosome. This chain is Large ribosomal subunit protein uL23, found in Fusobacterium nucleatum subsp. nucleatum (strain ATCC 25586 / DSM 15643 / BCRC 10681 / CIP 101130 / JCM 8532 / KCTC 2640 / LMG 13131 / VPI 4355).